A 111-amino-acid polypeptide reads, in one-letter code: Large ribosomal subunit protein uL24 (111 aa).

It belongs to the universal ribosomal protein uL24 family. In terms of assembly, part of the 50S ribosomal subunit.

One of two assembly initiator proteins, it binds directly to the 5'-end of the 23S rRNA, where it nucleates assembly of the 50S subunit. In terms of biological role, one of the proteins that surrounds the polypeptide exit tunnel on the outside of the subunit. The chain is Large ribosomal subunit protein uL24 from Bifidobacterium animalis subsp. lactis (strain AD011).